An 89-amino-acid chain; its full sequence is Small ribosomal subunit protein uS15 (89 aa).

Belongs to the universal ribosomal protein uS15 family. In terms of assembly, part of the 30S ribosomal subunit. Forms a bridge to the 50S subunit in the 70S ribosome, contacting the 23S rRNA.

Functionally, one of the primary rRNA binding proteins, it binds directly to 16S rRNA where it helps nucleate assembly of the platform of the 30S subunit by binding and bridging several RNA helices of the 16S rRNA. Forms an intersubunit bridge (bridge B4) with the 23S rRNA of the 50S subunit in the ribosome. The polypeptide is Small ribosomal subunit protein uS15 (Pseudomonas putida (strain GB-1)).